Reading from the N-terminus, the 255-residue chain is MAGHSKWANIKRQKERVDAKKGKTFAQLSRAIIVAARHGLPDPTGNFQLRTAIEKAKAAGIPNENIERAIAKGAGTYENDDTIYEEIRYEGYGPGGVAILIEALTDNRNRTAADLRAAFSKRGGNLGETGCVSWMFDQKGVILIEGEVNEDRLLEASVEGGADSYELFSEDEEIGAEVFTEVTNLERLTQTLKEKQFNVTEAELRWIPNNRMDVNDPEQARSLLKLIDALESLDDVQNVTANFEIAEELMMANVA.

Belongs to the TACO1 family.

It is found in the cytoplasm. The polypeptide is Probable transcriptional regulatory protein PCC8801_2028 (Rippkaea orientalis (strain PCC 8801 / RF-1) (Cyanothece sp. (strain PCC 8801))).